The sequence spans 116 residues: MAGRSGDSDEDLLKAVRLIKFLYQSNPPPNPEGTRQARRNRRRRWRERQRQIHSISERILSTYLGRSAEPVPLQLPPLERLTLDCNEDCGTSGTQGVGSPQILVESPTILESGAKE.

Residues serine 5 and serine 8 each carry the phosphoserine; by host CK2 modification. Residues 18–26 (LIKFLYQSN) form a homomultimerization region. Residues 23–49 (YQSNPPPNPEGTRQARRNRRRRWRERQ) are disordered. Positions 34–50 (TRQARRNRRRRWRERQR) match the Nuclear localization signal and RNA-binding (RRE) motif. The span at 36–47 (QARRNRRRRWRE) shows a compositional bias: basic residues. The short motif at 73–84 (LQLPPLERLTLD) is the Nuclear export signal and binding to XPO1 element. 2 positions are modified to phosphoserine; by host: serine 92 and serine 99.

This sequence belongs to the HIV-1 REV protein family. In terms of assembly, homomultimer; when bound to the RRE. Multimeric assembly is essential for activity and may involve XPO1. Binds to human KPNB1, XPO1, TNPO1, RANBP5 and IPO7. Interacts with the viral Integrase. Interacts with human KHDRBS1. Interacts with human NAP1; this interaction decreases Rev multimerization and stimulates its activity. Interacts with human DEAD-box helicases DDX3 and DDX24; these interactions may serve for viral RNA export to the cytoplasm and packaging, respectively. Interacts with human PSIP1; this interaction may inhibit HIV-1 DNA integration by promoting dissociation of the Integrase-LEDGF/p75 complex. In terms of processing, asymmetrically arginine dimethylated at one site by host PRMT6. Methylation impairs the RNA-binding activity and export of viral RNA from the nucleus to the cytoplasm. Post-translationally, phosphorylated by protein kinase CK2. Presence of, and maybe binding to the N-terminus of the regulatory beta subunit of CK2 is necessary for CK2-mediated Rev's phosphorylation.

The protein resides in the host nucleus. It is found in the host nucleolus. The protein localises to the host cytoplasm. Its function is as follows. Escorts unspliced or incompletely spliced viral pre-mRNAs (late transcripts) out of the nucleus of infected cells. These pre-mRNAs carry a recognition sequence called Rev responsive element (RRE) located in the env gene, that is not present in fully spliced viral mRNAs (early transcripts). This function is essential since most viral proteins are translated from unspliced or partially spliced pre-mRNAs which cannot exit the nucleus by the pathway used by fully processed cellular mRNAs. Rev itself is translated from a fully spliced mRNA that readily exits the nucleus. Rev's nuclear localization signal (NLS) binds directly to KPNB1/Importin beta-1 without previous binding to KPNA1/Importin alpha-1. KPNB1 binds to the GDP bound form of RAN (Ran-GDP) and targets Rev to the nucleus. In the nucleus, the conversion from Ran-GDP to Ran-GTP dissociates Rev from KPNB1 and allows Rev's binding to the RRE in viral pre-mRNAs. Rev multimerization on the RRE via cooperative assembly exposes its nuclear export signal (NES) to the surface. Rev can then form a complex with XPO1/CRM1 and Ran-GTP, leading to nuclear export of the complex. Conversion from Ran-GTP to Ran-GDP mediates dissociation of the Rev/RRE/XPO1/RAN complex, so that Rev can return to the nucleus for a subsequent round of export. Beside KPNB1, also seems to interact with TNPO1/Transportin-1, RANBP5/IPO5 and IPO7/RANBP7 for nuclear import. The nucleoporin-like HRB/RIP is an essential cofactor that probably indirectly interacts with Rev to release HIV RNAs from the perinuclear region to the cytoplasm. The protein is Protein Rev of Human immunodeficiency virus type 1 group M subtype B (isolate HXB3) (HIV-1).